A 233-amino-acid polypeptide reads, in one-letter code: Cobalt-containing nitrile hydratase subunit beta (233 aa).

The protein belongs to the nitrile hydratase subunit beta family. In terms of assembly, heterotetramer of two alpha and two beta chains.

It catalyses the reaction an aliphatic primary amide = an aliphatic nitrile + H2O. Its function is as follows. NHase catalyzes the hydration of various nitrile compounds to the corresponding amides. This chain is Cobalt-containing nitrile hydratase subunit beta, found in Pseudonocardia thermophila.